A 141-amino-acid polypeptide reads, in one-letter code: VLSPADKTNVKTAWEKVGGHAGEYGAEALERMFLSFPTTKTYFPHFDLSHGSAQVKAHGKKVADALTTAVSHVDDMPSALSALSDLHAHKLRVDPVNFKLLSHCLLVTLACHHPADFTPAVHASLDKFLASVSTVLTSKYR.

Residues 1-141 (VLSPADKTNV…VSTVLTSKYR (141 aa)) enclose the Globin domain. A Phosphoserine modification is found at S3. Position 7 is an N6-succinyllysine (K7). T8 carries the phosphothreonine modification. K11 carries the N6-succinyllysine modification. K16 is subject to N6-acetyllysine; alternate. An N6-succinyllysine; alternate modification is found at K16. Phosphotyrosine is present on Y24. S35 carries the post-translational modification Phosphoserine. K40 carries the post-translational modification N6-succinyllysine. Residue S49 is modified to Phosphoserine. H58 contributes to the O2 binding site. Residue H87 participates in heme b binding. S102 carries the post-translational modification Phosphoserine. A Phosphothreonine modification is found at T108. A phosphoserine mark is found at S124 and S131. Phosphothreonine is present on residues T134 and T137. Position 138 is a phosphoserine (S138).

Belongs to the globin family. As to quaternary structure, heterotetramer of two alpha chains and two beta chains. In terms of tissue distribution, red blood cells.

Its function is as follows. Involved in oxygen transport from the lung to the various peripheral tissues. In terms of biological role, hemopressin acts as an antagonist peptide of the cannabinoid receptor CNR1. Hemopressin-binding efficiently blocks cannabinoid receptor CNR1 and subsequent signaling. This Loris tardigradus (Slender loris) protein is Hemoglobin subunit alpha (HBA).